A 308-amino-acid polypeptide reads, in one-letter code: Acetaldehyde dehydrogenase 2 (308 aa).

S12–I15 serves as a coordination point for NAD(+). C127 serves as the catalytic Acyl-thioester intermediate. Residues S162–N170 and N281 each bind NAD(+).

It belongs to the acetaldehyde dehydrogenase family.

The catalysed reaction is acetaldehyde + NAD(+) + CoA = acetyl-CoA + NADH + H(+). The sequence is that of Acetaldehyde dehydrogenase 2 from Mycobacterium marinum (strain ATCC BAA-535 / M).